The primary structure comprises 165 residues: Glucosamine 6-phosphate N-acetyltransferase 1 (165 aa).

Residues 22–165 form the N-acetyltransferase domain; that stretch reads YRIRPLELAD…EKNVQMGLYF (144 aa). Substrate is bound by residues Ser-44, 92–95, and 104–106; these read KFIR and EDV. Residue 114 to 119 participates in acetyl-CoA binding; sequence GRGLGE. 135 to 136 contacts substrate; it reads YK. Residue 149–151 participates in acetyl-CoA binding; that stretch reads YAK.

The protein belongs to the acetyltransferase family. GNA1 subfamily. In terms of assembly, homodimer. Highly expressed in the root elongation zone and at lower levels in leaves and grains.

Its subcellular location is the endoplasmic reticulum membrane. It catalyses the reaction D-glucosamine 6-phosphate + acetyl-CoA = N-acetyl-D-glucosamine 6-phosphate + CoA + H(+). Its pathway is nucleotide-sugar biosynthesis; UDP-N-acetyl-alpha-D-glucosamine biosynthesis; N-acetyl-alpha-D-glucosamine 1-phosphate from alpha-D-glucosamine 6-phosphate (route I): step 1/2. Functionally, acetyltransferase involved in de novo biosynthesis of UDP-N-acetylglucosamine (UDP-GlcNAc) in roots and is required for maintaining normal root cell shape. UDP-GlcNAc is an essential metabolite that serves as an initial sugar donor for N-glycan synthesis and thus plays an important role in protein and lipid glycosylation. In Oryza sativa subsp. japonica (Rice), this protein is Glucosamine 6-phosphate N-acetyltransferase 1 (GNA1).